A 184-amino-acid polypeptide reads, in one-letter code: uncharacterized protein (184 aa).

Residues 5–27 (YLLATAMFLIVCVYVISETVNLH) traverse the membrane as a helical segment.

It is found in the membrane. This is an uncharacterized protein from Methanocaldococcus jannaschii (strain ATCC 43067 / DSM 2661 / JAL-1 / JCM 10045 / NBRC 100440) (Methanococcus jannaschii).